The sequence spans 367 residues: Heme A synthase (367 aa).

The next 5 membrane-spanning stretches (helical) occupy residues 12–32, 99–119, 127–147, 163–183, and 198–218; these read GAVRTWLYVVAALVVAMVAVG, LLGRVIGLVFFLPLILFWWQG, LGLLGLGLLGGLQGAIGWIMV, LALHLTTASLILAGLVWLAAG, and ATALLLPILVLVQIFLGGLVA. Histidine 264 contacts heme. Helical transmembrane passes span 266 to 286, 296 to 316, and 317 to 337; these read VTAYLVFVVAVLHAVDARLTG, GVVILVLAQMALGIATLLLAV, and PLWAALAHQVLAMAVLTMATV. Histidine 324 contributes to the heme binding site.

Belongs to the COX15/CtaA family. Type 2 subfamily. As to quaternary structure, interacts with CtaB. The cofactor is heme b.

It localises to the cell membrane. The enzyme catalyses Fe(II)-heme o + 2 A + H2O = Fe(II)-heme a + 2 AH2. It functions in the pathway porphyrin-containing compound metabolism; heme A biosynthesis; heme A from heme O: step 1/1. In terms of biological role, catalyzes the conversion of heme O to heme A by two successive hydroxylations of the methyl group at C8. The first hydroxylation forms heme I, the second hydroxylation results in an unstable dihydroxymethyl group, which spontaneously dehydrates, resulting in the formyl group of heme A. In Methylobacterium radiotolerans (strain ATCC 27329 / DSM 1819 / JCM 2831 / NBRC 15690 / NCIMB 10815 / 0-1), this protein is Heme A synthase.